Consider the following 535-residue polypeptide: Nuclear/nucleolar GTPase 2 (535 aa).

Positions 1–42 (MAKKKERAVNVSGKPRHSLDVNRANDKKGAGGGAGGGGGGRS) are disordered. Over residues 17–29 (HSLDVNRANDKKG) the composition is skewed to basic and acidic residues. Residues 30–41 (AGGGAGGGGGGR) show a composition bias toward gly residues. Residues 213-374 (WGELYKVIDS…LIDCPGVVYQ (162 aa)) form the CP-type G domain. The segment at 261–264 (NKCD) is G4. The tract at residues 290 to 292 (SIN) is G5. Residues 323–330 (GYPNVGKS) are G1. The segment at 349–353 (GETKV) is G2. Residues 367–370 (DCPG) are G3. The disordered stretch occupies residues 464 to 495 (FFVPPPQQGEDSPSETAEPVDKSDEEGVSSDR).

It belongs to the TRAFAC class YlqF/YawG GTPase family. RsgA subfamily.

Its subcellular location is the nucleus. It localises to the nucleolus. In terms of biological role, GTPase involved in pre-60S ribosomal subunit maturation. The chain is Nuclear/nucleolar GTPase 2 from Oryza sativa subsp. indica (Rice).